A 138-amino-acid chain; its full sequence is Large ribosomal subunit protein eL14B (138 aa).

N-acetylserine is present on Ser-2.

It belongs to the eukaryotic ribosomal protein eL14 family. As to quaternary structure, component of the large ribosomal subunit (LSU). Mature yeast ribosomes consist of a small (40S) and a large (60S) subunit. The 40S small subunit contains 1 molecule of ribosomal RNA (18S rRNA) and 33 different proteins (encoded by 57 genes). The large 60S subunit contains 3 rRNA molecules (25S, 5.8S and 5S rRNA) and 46 different proteins (encoded by 81 genes). N-terminally acetylated by acetyltransferase NatA.

The protein resides in the cytoplasm. Its function is as follows. Component of the ribosome, a large ribonucleoprotein complex responsible for the synthesis of proteins in the cell. The small ribosomal subunit (SSU) binds messenger RNAs (mRNAs) and translates the encoded message by selecting cognate aminoacyl-transfer RNA (tRNA) molecules. The large subunit (LSU) contains the ribosomal catalytic site termed the peptidyl transferase center (PTC), which catalyzes the formation of peptide bonds, thereby polymerizing the amino acids delivered by tRNAs into a polypeptide chain. The nascent polypeptides leave the ribosome through a tunnel in the LSU and interact with protein factors that function in enzymatic processing, targeting, and the membrane insertion of nascent chains at the exit of the ribosomal tunnel. The sequence is that of Large ribosomal subunit protein eL14B from Saccharomyces cerevisiae (strain ATCC 204508 / S288c) (Baker's yeast).